The chain runs to 180 residues: MNTRLEKFYKDNVVPALMKEFGYTNPMEVPKLVKVTLNMGVGEAATNKKILENAVADMAKISGQKPVVTKSRVSVASFKIRDGWPIGCKTTLRRAKMYEFLDRLINISLPRVRDFRGVSGRSFDGRGNFNMGVKEQIIFPEIDFDAVDAIRGMDIAITTTAKTDAEAKALLAAFKFPFRN.

It belongs to the universal ribosomal protein uL5 family. In terms of assembly, part of the 50S ribosomal subunit; part of the 5S rRNA/L5/L18/L25 subcomplex. Contacts the 5S rRNA and the P site tRNA. Forms a bridge to the 30S subunit in the 70S ribosome.

This is one of the proteins that bind and probably mediate the attachment of the 5S RNA into the large ribosomal subunit, where it forms part of the central protuberance. In the 70S ribosome it contacts protein S13 of the 30S subunit (bridge B1b), connecting the 2 subunits; this bridge is implicated in subunit movement. Contacts the P site tRNA; the 5S rRNA and some of its associated proteins might help stabilize positioning of ribosome-bound tRNAs. This Xanthomonas axonopodis pv. citri (strain 306) protein is Large ribosomal subunit protein uL5.